The primary structure comprises 271 residues: Regulatory protein RecX (271 aa).

The protein belongs to the RecX family.

Its subcellular location is the cytoplasm. In terms of biological role, modulates RecA activity. The sequence is that of Regulatory protein RecX from Lactobacillus delbrueckii subsp. bulgaricus (strain ATCC BAA-365 / Lb-18).